Here is a 318-residue protein sequence, read N- to C-terminus: Leucine-rich repeat domain-containing protein YddK (318 aa).

9 LRR repeats span residues 109-129, 130-151, 153-173, 174-194, 195-216, 217-237, 238-258, 260-280, and 284-305; these read NFTS…TNYD, RLVK…QGRN, SITH…DRLS, SVTY…ESCE, WLQY…NKNE, LLLL…LFPN, LNTL…YSNF, NVQT…DFLT, and SIKS…NTSD.

This chain is Leucine-rich repeat domain-containing protein YddK (yddK), found in Escherichia coli (strain K12).